A 239-amino-acid polypeptide reads, in one-letter code: Seed lectin beta chain (239 aa).

D-glucose contacts are provided by aspartate 88 and glycine 106. Residues glutamate 126 and aspartate 128 each coordinate Mn(2+). Ca(2+) contacts are provided by aspartate 128, asparagine 132, and aspartate 137. Positions 137 and 142 each coordinate Mn(2+). D-glucose contacts are provided by glycine 217 and alanine 218.

Belongs to the leguminous lectin family. Tetramer consisting of heterodimers of alpha and beta chains.

Galactose-binding lectin. Agglutinates human erythrocytes, and requires Ca(2+) and Mn(2+) ions for full agglutinating activity. Has antifungal activity against Fusarium sp., A.niger and A.flavus. In Spatholobus parviflorus (Butea parviflora), this protein is Seed lectin beta chain.